The chain runs to 87 residues: Phosphoribosyl-ATP pyrophosphatase (87 aa).

Belongs to the PRA-PH family.

The protein localises to the cytoplasm. The catalysed reaction is 1-(5-phospho-beta-D-ribosyl)-ATP + H2O = 1-(5-phospho-beta-D-ribosyl)-5'-AMP + diphosphate + H(+). The protein operates within amino-acid biosynthesis; L-histidine biosynthesis; L-histidine from 5-phospho-alpha-D-ribose 1-diphosphate: step 2/9. This chain is Phosphoribosyl-ATP pyrophosphatase, found in Clavibacter sepedonicus (Clavibacter michiganensis subsp. sepedonicus).